Consider the following 378-residue polypeptide: C-type lectin domain family 17, member A (378 aa).

The interval 1–119 (MHNLYSITGY…PPLPCKPRNM (119 aa)) is disordered. The Cytoplasmic portion of the chain corresponds to 1 to 172 (MHNLYSITGY…GCCQKRWMVY (172 aa)). 3 stretches are compositionally biased toward acidic residues: residues 17–27 (MEEEEEDDDYE), 43–53 (MEEEEEDDDYE), and 69–79 (MEEEEEDDDYE). Pro residues predominate over residues 86–101 (KDLPPKPGSSAPPRPP). The chain crosses the membrane as a helical; Signal-anchor for type II membrane protein span at residues 173 to 193 (LCLLVVTSLFLGCLGLTVTLI). At 194 to 378 (KYQELMEELR…YWICERKCSC (185 aa)) the chain is on the extracellular side. 2 N-linked (GlcNAc...) asparagine glycosylation sites follow: Asn215 and Asn237. Cystine bridges form between Cys254–Cys265, Cys282–Cys372, and Cys350–Cys364. One can recognise a C-type lectin domain in the interval 261–373 (FEGKCYYFSP…CYKTTYWICE (113 aa)). N-linked (GlcNAc...) asparagine glycosylation occurs at Asn285. Residues Glu341, Asn343, Glu348, Asn360, and Asp361 each coordinate Ca(2+).

Oligomer; disulfide-linked. Phosphorylated on tyrosine residues. As to expression, expressed on dividing B-cells of germinal centers in various tissues, including lymph nodes, tonsils, stomach, intestine, appendix and spleen.

Its subcellular location is the membrane. Its function is as follows. Cell surface receptor which may be involved in carbohydrate-mediated communication between cells in the germinal center. Binds glycans with terminal alpha-linked mannose or fucose residues. The protein is C-type lectin domain family 17, member A (CLEC17A) of Homo sapiens (Human).